The chain runs to 185 residues: Movement protein P1 (185 aa).

Functionally, transports viral genome to neighboring plant cells directly through plasmosdesmata, without any budding. The movement protein allows efficient cell to cell propagation, by bypassing the host cell wall barrier (Potential). Likely acts as a suppressor of RNA-mediated gene silencing, also known as post-transcriptional gene silencing (PTGS), a mechanism of plant viral defense that performs sequence-specific inhibition of viral mRNAs expression. The chain is Movement protein P1 from Glycine max (Soybean).